The primary structure comprises 306 residues: Aspartate carbamoyltransferase catalytic subunit (306 aa).

The carbamoyl phosphate site is built by Arg51 and Thr52. Lys79 contacts L-aspartate. The carbamoyl phosphate site is built by Arg101, His129, and Gln132. Positions 162 and 213 each coordinate L-aspartate. Carbamoyl phosphate-binding residues include Ala254 and Pro255.

The protein belongs to the aspartate/ornithine carbamoyltransferase superfamily. ATCase family. In terms of assembly, heterododecamer (2C3:3R2) of six catalytic PyrB chains organized as two trimers (C3), and six regulatory PyrI chains organized as three dimers (R2).

The enzyme catalyses carbamoyl phosphate + L-aspartate = N-carbamoyl-L-aspartate + phosphate + H(+). The protein operates within pyrimidine metabolism; UMP biosynthesis via de novo pathway; (S)-dihydroorotate from bicarbonate: step 2/3. Its function is as follows. Catalyzes the condensation of carbamoyl phosphate and aspartate to form carbamoyl aspartate and inorganic phosphate, the committed step in the de novo pyrimidine nucleotide biosynthesis pathway. This is Aspartate carbamoyltransferase catalytic subunit from Bacillus thuringiensis (strain Al Hakam).